The chain runs to 724 residues: 1,4-alpha-glucan branching enzyme GlgB 1 (724 aa).

The Nucleophile role is filled by aspartate 403. Glutamate 456 functions as the Proton donor in the catalytic mechanism.

Belongs to the glycosyl hydrolase 13 family. GlgB subfamily. As to quaternary structure, monomer.

It carries out the reaction Transfers a segment of a (1-&gt;4)-alpha-D-glucan chain to a primary hydroxy group in a similar glucan chain.. Its pathway is glycan biosynthesis; glycogen biosynthesis. Its function is as follows. Catalyzes the formation of the alpha-1,6-glucosidic linkages in glycogen by scission of a 1,4-alpha-linked oligosaccharide from growing alpha-1,4-glucan chains and the subsequent attachment of the oligosaccharide to the alpha-1,6 position. In Xanthomonas axonopodis pv. citri (strain 306), this protein is 1,4-alpha-glucan branching enzyme GlgB 1 (glgB1).